Reading from the N-terminus, the 245-residue chain is tRNA pseudouridine synthase A (245 aa).

Catalysis depends on D52, which acts as the Nucleophile. Y111 is a substrate binding site.

It belongs to the tRNA pseudouridine synthase TruA family. As to quaternary structure, homodimer.

It carries out the reaction uridine(38/39/40) in tRNA = pseudouridine(38/39/40) in tRNA. Formation of pseudouridine at positions 38, 39 and 40 in the anticodon stem and loop of transfer RNAs. The chain is tRNA pseudouridine synthase A from Rhodospirillum centenum (strain ATCC 51521 / SW).